A 256-amino-acid chain; its full sequence is Thiazole synthase (256 aa).

The active-site Schiff-base intermediate with DXP is the Lys96. 1-deoxy-D-xylulose 5-phosphate contacts are provided by residues Gly157, 183–184 (AG), and 205–206 (NT).

The protein belongs to the ThiG family. In terms of assembly, homotetramer. Forms heterodimers with either ThiH or ThiS.

Its subcellular location is the cytoplasm. The enzyme catalyses [ThiS sulfur-carrier protein]-C-terminal-Gly-aminoethanethioate + 2-iminoacetate + 1-deoxy-D-xylulose 5-phosphate = [ThiS sulfur-carrier protein]-C-terminal Gly-Gly + 2-[(2R,5Z)-2-carboxy-4-methylthiazol-5(2H)-ylidene]ethyl phosphate + 2 H2O + H(+). The protein operates within cofactor biosynthesis; thiamine diphosphate biosynthesis. In terms of biological role, catalyzes the rearrangement of 1-deoxy-D-xylulose 5-phosphate (DXP) to produce the thiazole phosphate moiety of thiamine. Sulfur is provided by the thiocarboxylate moiety of the carrier protein ThiS. In vitro, sulfur can be provided by H(2)S. The polypeptide is Thiazole synthase (Bacillus cereus (strain 03BB102)).